The primary structure comprises 309 residues: Serine/threonine-protein phosphatase 2A catalytic subunit beta isoform (309 aa).

Mn(2+)-binding residues include Asp57, His59, Asp85, and Asn117. The Proton donor role is filled by His118. Residues His167 and His241 each contribute to the Mn(2+) site. Tyr307 is subject to Phosphotyrosine. A Leucine methyl ester modification is found at Leu309.

This sequence belongs to the PPP phosphatase family. PP-1 subfamily. Found in a complex with at least ARL2, PPP2CB, PPP2R1A, PPP2R2A, PPP2R5E and TBCD. Interacts with TBCD. PP2A consists of a common heterodimeric core enzyme (composed of a 36 kDa catalytic subunit (subunit C) and a 65 kDa constant regulatory subunit (PR65) (subunit A)) that associates with a variety of regulatory subunits. Proteins that associate with the core dimer include three families of regulatory subunits B (the R2/B/PR55/B55, R3/B''/PR72/PR130/PR59 and R5/B'/B56 families), the 48 kDa variable regulatory subunit, viral proteins, and cell signaling molecules. Binds PPME1. May indirectly interact with SGO1, most probably through regulatory B56 subunits. Interacts with CTTNBP2NL. Interacts with PTPA. Part of the core of STRIPAK complexes composed of PP2A catalytic and scaffolding subunits, the striatins (PP2A regulatory subunits), the striatin-associated proteins MOB4, STRIP1 and STRIP2, PDCD10 and members of the STE20 kinases, such as STK24 and STK26. Requires Mn(2+) as cofactor. Reversibly methyl esterified on Leu-309 by leucine carboxyl methyltransferase 1 (Lcmt1) and protein phosphatase methylesterase 1 (PPME1). Carboxyl methylation influences the affinity of the catalytic subunit for the different regulatory subunits, thereby modulating the PP2A holoenzyme's substrate specificity, enzyme activity and cellular localization. In terms of processing, phosphorylation of either threonine (by autophosphorylation-activated protein kinase) or tyrosine results in inactivation of the phosphatase. Auto-dephosphorylation has been suggested as a mechanism for reactivation. Post-translationally, may be monoubiquitinated by NOSIP.

Its subcellular location is the cytoplasm. It is found in the nucleus. The protein localises to the chromosome. It localises to the centromere. The protein resides in the cytoskeleton. Its subcellular location is the spindle pole. It catalyses the reaction O-phospho-L-seryl-[protein] + H2O = L-seryl-[protein] + phosphate. The enzyme catalyses O-phospho-L-threonyl-[protein] + H2O = L-threonyl-[protein] + phosphate. In terms of biological role, catalytic subunit of protein phosphatase 2A (PP2A), a serine/threonine phosphatase involved in the regulation of a wide variety of enzymes, signal transduction pathways, and cellular events. PP2A can modulate the activity of phosphorylase B kinase, casein kinase 2, mitogen-stimulated S6 kinase, and MAP-2 kinase. Part of the striatin-interacting phosphatase and kinase (STRIPAK) complexes. STRIPAK complexes have critical roles in protein (de)phosphorylation and are regulators of multiple signaling pathways including Hippo, MAPK, nuclear receptor and cytoskeleton remodeling. Different types of STRIPAK complexes are involved in a variety of biological processes such as cell growth, differentiation, apoptosis, metabolism and immune regulation. This chain is Serine/threonine-protein phosphatase 2A catalytic subunit beta isoform (PPP2CB), found in Oryctolagus cuniculus (Rabbit).